The chain runs to 937 residues: CAP-Gly domain-containing linker protein 1 homolog (937 aa).

Positions 39-81 (GPIHGKDGMFCGIELLEPNGKHDGTFQGVSYFIATPYHGIFAP) constitute a CAP-Gly domain. Disordered regions lie at residues 90-131 (EELP…VMST) and 264-548 (LPND…SRLQ). Residues 268–281 (LNANFSNKNSTTTF) are compositionally biased toward polar residues. Basic and acidic residues predominate over residues 285–295 (ETPKVEIRENG). The segment covering 296–309 (NLDNSIETPPQQSP) has biased composition (polar residues). 4 stretches are compositionally biased toward basic and acidic residues: residues 317 to 353 (HESD…KEEP), 383 to 396 (IEAE…EIKS), 409 to 424 (PQKE…ETPR), and 463 to 473 (AKERVEKEKKI). Residues 492–501 (SSIPSTSSAS) are compositionally biased toward low complexity. 2 coiled-coil regions span residues 566–740 (EDNE…VDEI) and 773–800 (QQIE…DLMQ). Disordered regions lie at residues 819-866 (MESR…DSMN) and 916-937 (PTIK…GLVM). Low complexity predominate over residues 832–844 (RSRSSASGSRPIS). The segment covering 845–858 (MATSNGGDQRLSTS) has biased composition (polar residues).

In Caenorhabditis elegans, this protein is CAP-Gly domain-containing linker protein 1 homolog.